Here is a 133-residue protein sequence, read N- to C-terminus: Large ribosomal subunit protein bL20 (133 aa).

Belongs to the bacterial ribosomal protein bL20 family.

Binds directly to 23S ribosomal RNA and is necessary for the in vitro assembly process of the 50S ribosomal subunit. It is not involved in the protein synthesizing functions of that subunit. The sequence is that of Large ribosomal subunit protein bL20 from Chelativorans sp. (strain BNC1).